The sequence spans 862 residues: S-layer protein EA1 (862 aa).

An N-terminal signal peptide occupies residues 1-29 (MAKTNSYKKVIAGTMTAAMVAGIVSPVAA). SLH domains follow at residues 30-93 (AGKS…NAQP), 94-151 (SFKD…KVNG), and 152-214 (ELVT…DNAQ).

It is found in the secreted. The protein resides in the cell wall. It localises to the S-layer. In terms of biological role, the S-layer is a paracrystalline mono-layered assembly of proteins which coat the surface of bacteria. The chain is S-layer protein EA1 (eag) from Bacillus anthracis.